The sequence spans 623 residues: Glutamyl-tRNA(Gln) amidotransferase subunit E (623 aa).

The protein belongs to the GatB/GatE family. GatE subfamily. As to quaternary structure, heterodimer of GatD and GatE.

It catalyses the reaction L-glutamyl-tRNA(Gln) + L-glutamine + ATP + H2O = L-glutaminyl-tRNA(Gln) + L-glutamate + ADP + phosphate + H(+). Allows the formation of correctly charged Gln-tRNA(Gln) through the transamidation of misacylated Glu-tRNA(Gln) in organisms which lack glutaminyl-tRNA synthetase. The reaction takes place in the presence of glutamine and ATP through an activated gamma-phospho-Glu-tRNA(Gln). The GatDE system is specific for glutamate and does not act on aspartate. The protein is Glutamyl-tRNA(Gln) amidotransferase subunit E of Haloarcula marismortui (strain ATCC 43049 / DSM 3752 / JCM 8966 / VKM B-1809) (Halobacterium marismortui).